The primary structure comprises 275 residues: 2-C-methyl-D-erythritol 4-phosphate cytidylyltransferase (275 aa).

It belongs to the IspD/TarI cytidylyltransferase family. IspD subfamily.

The enzyme catalyses 2-C-methyl-D-erythritol 4-phosphate + CTP + H(+) = 4-CDP-2-C-methyl-D-erythritol + diphosphate. It participates in isoprenoid biosynthesis; isopentenyl diphosphate biosynthesis via DXP pathway; isopentenyl diphosphate from 1-deoxy-D-xylulose 5-phosphate: step 2/6. Catalyzes the formation of 4-diphosphocytidyl-2-C-methyl-D-erythritol from CTP and 2-C-methyl-D-erythritol 4-phosphate (MEP). The sequence is that of 2-C-methyl-D-erythritol 4-phosphate cytidylyltransferase from Corynebacterium jeikeium (strain K411).